Reading from the N-terminus, the 97-residue chain is Putative pterin-4-alpha-carbinolamine dehydratase (97 aa).

Belongs to the pterin-4-alpha-carbinolamine dehydratase family.

The enzyme catalyses (4aS,6R)-4a-hydroxy-L-erythro-5,6,7,8-tetrahydrobiopterin = (6R)-L-erythro-6,7-dihydrobiopterin + H2O. This chain is Putative pterin-4-alpha-carbinolamine dehydratase, found in Brucella abortus (strain S19).